The following is a 1025-amino-acid chain: Dihydropyrimidine dehydrogenase [NADP(+)] (1025 aa).

Residues 69–100 (ERGALREAVRCLKCADAPCQKSCPTSLDIKSF) enclose the 4Fe-4S ferredoxin-type 1 domain. Cys-79, Cys-82, Cys-87, and Cys-91 together coordinate [4Fe-4S] cluster. Val-129 provides a ligand contact to FAD. [4Fe-4S] cluster is bound by residues Cys-130, Cys-136, Cys-140, and Gln-156. FAD-binding positions include 194–198 (GAGPA), 218–226 (EKQEYVGGL), and Arg-235. Residues 340–343 (AGDT), 364–365 (RK), and Arg-371 contribute to the NADP(+) site. An N6-acetyllysine modification is found at Lys-384. Residues 437–439 (PFG) and 481–487 (DVVGMAN) contribute to the NADP(+) site. An FAD-binding site is contributed by 480–489 (GDVVGMANTT). Residues Ser-550 and 574–575 (KT) contribute to the FMN site. Substrate contacts are provided by residues Asn-609 and 668–670 (NLS). The active-site Proton acceptor is the Cys-671. An FMN-binding site is contributed by Lys-709. A substrate-binding site is contributed by 736-737 (NT). FMN is bound by residues Gly-767, 793–795 (TGG), and 816–817 (CS). Residue Ser-905 is modified to Phosphoserine. 2 4Fe-4S ferredoxin-type domains span residues 944–976 (VVAL…FDPE) and 978–1007 (HLPT…MVSR). Residues Cys-953, Cys-956, Cys-959, Cys-963, Cys-986, Cys-989, Cys-992, and Cys-996 each contribute to the [4Fe-4S] cluster site.

It belongs to the dihydropyrimidine dehydrogenase family. As to quaternary structure, homodimer. Requires FAD as cofactor. The cofactor is FMN. It depends on [4Fe-4S] cluster as a cofactor.

The protein localises to the cytoplasm. It carries out the reaction 5,6-dihydrouracil + NADP(+) = uracil + NADPH + H(+). The catalysed reaction is 5,6-dihydrothymine + NADP(+) = thymine + NADPH + H(+). It participates in amino-acid biosynthesis; beta-alanine biosynthesis. Inactivated by 5-iodouracil. Functionally, involved in pyrimidine base degradation. Catalyzes the reduction of uracil and thymine. Also involved the degradation of the chemotherapeutic drug 5-fluorouracil. The protein is Dihydropyrimidine dehydrogenase [NADP(+)] of Rattus norvegicus (Rat).